A 548-amino-acid chain; its full sequence is Acetolactate synthase isozyme 2 large subunit (548 aa).

Position 47 (Glu-47) interacts with thiamine diphosphate. FAD-binding positions include Arg-149, 251–272 (HGTK…VGAR), and 294–313 (DIDP…LQGD). The thiamine pyrophosphate binding stretch occupies residues 377-457 (QHQMWAAQHI…LKIVLLDNQR (81 aa)). Residues Asp-428 and Asn-455 each contribute to the Mg(2+) site.

The protein belongs to the TPP enzyme family. As to quaternary structure, tetramer of two large (IlvG) and two small (IlvM) chains. The cofactor is FAD. Mg(2+) serves as cofactor. It depends on thiamine diphosphate as a cofactor.

The catalysed reaction is 2 pyruvate + H(+) = (2S)-2-acetolactate + CO2. It participates in amino-acid biosynthesis; L-isoleucine biosynthesis; L-isoleucine from 2-oxobutanoate: step 1/4. It functions in the pathway amino-acid biosynthesis; L-valine biosynthesis; L-valine from pyruvate: step 1/4. Its activity is regulated as follows. Inhibited by the herbicides chlorimuron ethyl, chlorsulfuron and imazapyr. Catalyzes the first step in the biosynthesis of branched-chain amino acids. The sequence is that of Acetolactate synthase isozyme 2 large subunit (ilvG) from Escherichia coli (strain K12).